The chain runs to 257 residues: Pyridoxine 5'-phosphate synthase (257 aa).

Asn6 contributes to the 3-amino-2-oxopropyl phosphate binding site. Residue Asp8 to His9 participates in 1-deoxy-D-xylulose 5-phosphate binding. Arg17 lines the 3-amino-2-oxopropyl phosphate pocket. The active-site Proton acceptor is His42. Arg44 and His49 together coordinate 1-deoxy-D-xylulose 5-phosphate. Catalysis depends on Glu69, which acts as the Proton acceptor. Thr99 contributes to the 1-deoxy-D-xylulose 5-phosphate binding site. His211 acts as the Proton donor in catalysis. 3-amino-2-oxopropyl phosphate is bound by residues Gly212 and Gly233–Gln234.

This sequence belongs to the PNP synthase family. Homooctamer; tetramer of dimers.

It is found in the cytoplasm. The enzyme catalyses 3-amino-2-oxopropyl phosphate + 1-deoxy-D-xylulose 5-phosphate = pyridoxine 5'-phosphate + phosphate + 2 H2O + H(+). Its pathway is cofactor biosynthesis; pyridoxine 5'-phosphate biosynthesis; pyridoxine 5'-phosphate from D-erythrose 4-phosphate: step 5/5. Functionally, catalyzes the complicated ring closure reaction between the two acyclic compounds 1-deoxy-D-xylulose-5-phosphate (DXP) and 3-amino-2-oxopropyl phosphate (1-amino-acetone-3-phosphate or AAP) to form pyridoxine 5'-phosphate (PNP) and inorganic phosphate. This Campylobacter hominis (strain ATCC BAA-381 / DSM 21671 / CCUG 45161 / LMG 19568 / NCTC 13146 / CH001A) protein is Pyridoxine 5'-phosphate synthase.